Here is a 177-residue protein sequence, read N- to C-terminus: Probetacellulin (177 aa).

A signal peptide spans 1 to 31 (MDPTAPGSSVSSLPLLLVLALGLAILHCVVA). The Extracellular segment spans residues 32 to 118 (DGNTTRTPET…LFYLQQDRGQ (87 aa)). Residues asparagine 34, asparagine 42, and asparagine 52 are each glycosylated (N-linked (GlcNAc...) asparagine). The 41-residue stretch at 65-105 (HFSRCPKQYKHYCIHGRCRFVVDEQTPSCICEKGYFGARCE) folds into the EGF-like domain. 3 cysteine pairs are disulfide-bonded: cysteine 69–cysteine 82, cysteine 77–cysteine 93, and cysteine 95–cysteine 104. Positions 112–177 (LQQDRGQILV…SEDIQETNIA (66 aa)) are cleaved as a propeptide — removed in mature form. A helical membrane pass occupies residues 119–139 (ILVVCLIVVMVVFIILVIGVC). The Cytoplasmic portion of the chain corresponds to 140–177 (TCCHPLRKHRKKKKEEKMETLDKDKTPISEDIQETNIA). The tract at residues 153–177 (KEEKMETLDKDKTPISEDIQETNIA) is disordered. The segment covering 154 to 167 (EEKMETLDKDKTPI) has biased composition (basic and acidic residues).

Monomer. Interacts with EGFR and ERBB4. As to expression, found in several mouse tissues including kidney, uterus and liver, as well as in beta tumor cell line and MCF-7 cells. It is not detected in the brain.

Its subcellular location is the secreted. It is found in the extracellular space. The protein resides in the cell membrane. In terms of biological role, growth factor that binds to EGFR, ERBB4 and other EGF receptor family members. Potent mitogen for retinal pigment epithelial cells and vascular smooth muscle cells. The sequence is that of Probetacellulin (Btc) from Mus musculus (Mouse).